A 388-amino-acid chain; its full sequence is MAGSATVEKRLDFGLLGPLQMTIDGTPVPSGTPKQRAVLAMLVINRNRPVGVDALITALWEEWPPSGARASIHSYVSNLRKLLGGAGIDPRVVLAAAPPGYRLSIPDNTCDLGRFVAEKTAGVHAAAAGRFEQASRHLSAALREWRGPVLDDLRDFQFVEPFATALVEDKVLAHTAKAEAEIACGRASAVIAELEALTFEHPYREPLWTQLITAYYLSDRQSDALGAYRRVKTTLADDLGIDPGPTLRALNERILRQQPLDAKKSAKTTAAGTVTVLDQRTMASGQQAVAYLHDIASGRGYPLQAAATRIGRLHDNDIVLDSANVSRHHAVIVDTGTNYVINDLRSSNGVHVQHERIRSAVTLNDGDHIRICDHEFTFQISAGTHGGT.

The ompR/PhoB-type DNA-binding region spans 2-105 (AGSATVEKRL…AAPPGYRLSI (104 aa)). The FHA domain maps to 308–357 (TRIGRLHDNDIVLDSANVSRHHAVIVDTGTNYVINDLRSSNGVHVQHERI).

It belongs to the AfsR/DnrI/RedD regulatory family. Post-translationally, phosphorylated on threonine residue(s).

Functionally, positively regulates the transcription of the embCAB operon. Exhibits ATPase and GTPase activities. This Mycobacterium bovis (strain ATCC BAA-935 / AF2122/97) protein is Transcriptional regulatory protein EmbR (embR).